The chain runs to 252 residues: uncharacterized protein (252 aa).

The 235-residue stretch at 13–247 folds into the ABC transporter domain; that stretch reads ITLENVNKWY…PKSERTRAFL (235 aa). Residue 45–52 participates in ATP binding; that stretch reads GPSGSGKS.

It belongs to the ABC transporter superfamily.

The protein localises to the cell inner membrane. Probably part of a binding-protein-dependent transport system YdhWXYZ for an amino acid. Probably responsible for energy coupling to the transport system. This is an uncharacterized protein from Escherichia coli (strain K12).